A 219-amino-acid chain; its full sequence is Cytidylate kinase (219 aa).

15 to 23 is an ATP binding site; sequence GPAASGKGT.

Belongs to the cytidylate kinase family. Type 1 subfamily.

The protein resides in the cytoplasm. The enzyme catalyses CMP + ATP = CDP + ADP. The catalysed reaction is dCMP + ATP = dCDP + ADP. This is Cytidylate kinase from Brucella suis biovar 1 (strain 1330).